Reading from the N-terminus, the 259-residue chain is Indole-3-glycerol phosphate synthase (259 aa).

This sequence belongs to the TrpC family.

The catalysed reaction is 1-(2-carboxyphenylamino)-1-deoxy-D-ribulose 5-phosphate + H(+) = (1S,2R)-1-C-(indol-3-yl)glycerol 3-phosphate + CO2 + H2O. It functions in the pathway amino-acid biosynthesis; L-tryptophan biosynthesis; L-tryptophan from chorismate: step 4/5. This Dehalococcoides mccartyi (strain ATCC BAA-2266 / KCTC 15142 / 195) (Dehalococcoides ethenogenes (strain 195)) protein is Indole-3-glycerol phosphate synthase.